The primary structure comprises 422 residues: BTB/POZ domain-containing protein KCTD18 (422 aa).

The 69-residue stretch at 12–80 (DILRLNVGGC…YLHGEVHIPT (69 aa)) folds into the BTB domain. Disordered stretches follow at residues 289-357 (VKNS…THLP) and 376-422 (LRRT…DQTK). Over residues 396-406 (PAGPPEPPPDA) the composition is skewed to pro residues. A compositionally biased stretch (polar residues) spans 413 to 422 (WTENGQDQTK).

The protein is BTB/POZ domain-containing protein KCTD18 (KCTD18) of Bos taurus (Bovine).